The sequence spans 201 residues: Small ribosomal subunit protein uS4c (201 aa).

The interval 15-43 (LGALPGLTNKRPRAGSDLRNQSRSGKKSQ) is disordered. Residues 89 to 152 (MRLDNILFRL…NSRTLIQNSL (64 aa)) enclose the S4 RNA-binding domain.

The protein belongs to the universal ribosomal protein uS4 family. As to quaternary structure, part of the 30S ribosomal subunit. Contacts protein S5. The interaction surface between S4 and S5 is involved in control of translational fidelity.

It is found in the plastid. The protein localises to the chloroplast. Functionally, one of the primary rRNA binding proteins, it binds directly to 16S rRNA where it nucleates assembly of the body of the 30S subunit. With S5 and S12 plays an important role in translational accuracy. This is Small ribosomal subunit protein uS4c (rps4) from Panax ginseng (Korean ginseng).